The chain runs to 190 residues: dTTP/UTP pyrophosphatase (190 aa).

D71 functions as the Proton acceptor in the catalytic mechanism.

The protein belongs to the Maf family. YhdE subfamily. It depends on a divalent metal cation as a cofactor.

Its subcellular location is the cytoplasm. The catalysed reaction is dTTP + H2O = dTMP + diphosphate + H(+). It carries out the reaction UTP + H2O = UMP + diphosphate + H(+). In terms of biological role, nucleoside triphosphate pyrophosphatase that hydrolyzes dTTP and UTP. May have a dual role in cell division arrest and in preventing the incorporation of modified nucleotides into cellular nucleic acids. The polypeptide is dTTP/UTP pyrophosphatase (Xanthomonas euvesicatoria pv. vesicatoria (strain 85-10) (Xanthomonas campestris pv. vesicatoria)).